Consider the following 119-residue polypeptide: NADH dehydrogenase [ubiquinone] 1 subunit C2 (119 aa).

The chain crosses the membrane as a helical span at residues 56 to 75; it reads GLHRQLLYITAFFFAGYYLV.

This sequence belongs to the complex I NDUFC2 subunit family. In terms of assembly, complex I is composed of 45 different subunits. Interacts with TMEM242.

Its subcellular location is the mitochondrion inner membrane. Accessory subunit of the mitochondrial membrane respiratory chain NADH dehydrogenase (Complex I), that is believed not to be involved in catalysis but required for the complex assembly. Complex I functions in the transfer of electrons from NADH to the respiratory chain. The immediate electron acceptor for the enzyme is believed to be ubiquinone. The protein is NADH dehydrogenase [ubiquinone] 1 subunit C2 of Gorilla gorilla gorilla (Western lowland gorilla).